Consider the following 77-residue polypeptide: Exodeoxyribonuclease 7 small subunit (77 aa).

This sequence belongs to the XseB family. Heterooligomer composed of large and small subunits.

The protein localises to the cytoplasm. The enzyme catalyses Exonucleolytic cleavage in either 5'- to 3'- or 3'- to 5'-direction to yield nucleoside 5'-phosphates.. Its function is as follows. Bidirectionally degrades single-stranded DNA into large acid-insoluble oligonucleotides, which are then degraded further into small acid-soluble oligonucleotides. The polypeptide is Exodeoxyribonuclease 7 small subunit (Trichlorobacter lovleyi (strain ATCC BAA-1151 / DSM 17278 / SZ) (Geobacter lovleyi)).